Consider the following 347-residue polypeptide: Protein RecA (347 aa).

ATP is bound at residue 64 to 71 (GPESSGKT).

It belongs to the RecA family.

It localises to the cytoplasm. Can catalyze the hydrolysis of ATP in the presence of single-stranded DNA, the ATP-dependent uptake of single-stranded DNA by duplex DNA, and the ATP-dependent hybridization of homologous single-stranded DNAs. It interacts with LexA causing its activation and leading to its autocatalytic cleavage. The protein is Protein RecA of Bacillus velezensis (strain DSM 23117 / BGSC 10A6 / LMG 26770 / FZB42) (Bacillus amyloliquefaciens subsp. plantarum).